We begin with the raw amino-acid sequence, 358 residues long: Peptide chain release factor 1 (358 aa).

Q234 is modified (N5-methylglutamine).

The protein belongs to the prokaryotic/mitochondrial release factor family. In terms of processing, methylated by PrmC. Methylation increases the termination efficiency of RF1.

The protein resides in the cytoplasm. Functionally, peptide chain release factor 1 directs the termination of translation in response to the peptide chain termination codons UAG and UAA. This is Peptide chain release factor 1 from Leifsonia xyli subsp. xyli (strain CTCB07).